Reading from the N-terminus, the 53-residue chain is MLHYAVVFFVIAIIAAVLGFGGIAAGAAGIAKILFFVFLVLALLSILGGVFRK.

Helical transmembrane passes span 5–25 and 30–50; these read AVVFFVIAIIAAVLGFGGIAA and IAKILFFVFLVLALLSILGGV.

It belongs to the UPF0391 family.

It is found in the cell membrane. The polypeptide is UPF0391 membrane protein BP1737 (Bordetella pertussis (strain Tohama I / ATCC BAA-589 / NCTC 13251)).